A 378-amino-acid chain; its full sequence is Peptide methionine sulfoxide reductase MsrA/MsrB (378 aa).

Residues glutamine 40 to alanine 197 form a peptide methionine sulfoxide reductase A region. Cysteine 48 is a catalytic residue. The 123-residue stretch at aspartate 240–lysine 362 folds into the MsrB domain. The Nucleophile role is filled by cysteine 351.

This sequence in the N-terminal section; belongs to the MsrA Met sulfoxide reductase family. The protein in the C-terminal section; belongs to the MsrB Met sulfoxide reductase family.

The catalysed reaction is L-methionyl-[protein] + [thioredoxin]-disulfide + H2O = L-methionyl-(S)-S-oxide-[protein] + [thioredoxin]-dithiol. It catalyses the reaction [thioredoxin]-disulfide + L-methionine + H2O = L-methionine (S)-S-oxide + [thioredoxin]-dithiol. The enzyme catalyses L-methionyl-[protein] + [thioredoxin]-disulfide + H2O = L-methionyl-(R)-S-oxide-[protein] + [thioredoxin]-dithiol. Its function is as follows. Has an important function as a repair enzyme for proteins that have been inactivated by oxidation. Catalyzes the reversible oxidation-reduction of methionine sulfoxide in proteins to methionine. The protein is Peptide methionine sulfoxide reductase MsrA/MsrB (msrAB) of Vibrio cholerae serotype O1 (strain ATCC 39315 / El Tor Inaba N16961).